A 293-amino-acid chain; its full sequence is Small ribosomal subunit protein uS5 (293 aa).

The segment at 1-56 (MADDAGAAGGPGGPGGPGMGGRGGFRGGFGSGVRGRGRGRGRGRGRGRGARGGKAE) is disordered. At alanine 2 the chain carries N-acetylalanine. Gly residues predominate over residues 7-34 (AAGGPGGPGGPGMGGRGGFRGGFGSGVR). Residues 35–51 (GRGRGRGRGRGRGRGAR) are compositionally biased toward basic residues. Residues lysine 54 and lysine 58 each participate in a glycyl lysine isopeptide (Lys-Gly) (interchain with G-Cter in ubiquitin) cross-link. Positions 102-165 (LKDEVLKIMP…ILAKLSIVPV (64 aa)) constitute an S5 DRBM domain. Threonine 252 bears the Phosphothreonine mark. Lysine 263 carries the post-translational modification N6-acetyllysine. A Phosphoserine modification is found at serine 264. At threonine 270 the chain carries Phosphothreonine. Lysine 275 is modified (N6-acetyllysine; alternate). Residue lysine 275 forms a Glycyl lysine isopeptide (Lys-Gly) (interchain with G-Cter in SUMO1); alternate linkage. Lysine 275 is covalently cross-linked (Glycyl lysine isopeptide (Lys-Gly) (interchain with G-Cter in SUMO2); alternate). Residue lysine 275 forms a Glycyl lysine isopeptide (Lys-Gly) (interchain with G-Cter in ubiquitin); alternate linkage. Serine 281 carries the phosphoserine modification.

The protein belongs to the universal ribosomal protein uS5 family. Component of the small ribosomal subunit. Interacts with zinc finger protein ZNF277 (via zinc-finger domains); the interaction is direct; the interaction is extra-ribosomal. Interaction with ZNF277 competes with the binding of RPS2 to protein arginine methyltransferase PRMT3. In terms of processing, citrullinated by PADI4 in the Arg/Gly-rich region. Post-translationally, asymmetric arginine dimethylation by PRMT3 occurs at multiple sites in the Arg/Gly-rich region. Monoubiquitinated at Lys-54 and Lys-58 by RNF10 when a ribosome has stalled during translation, leading to its degradation by the proteasome. Deubiquitinated at Lys-54 and Lys-58 by USP10, preventing degradation by the proteasome and promoting 40S ribosome subunit recycling following ribosome dissociation.

The protein localises to the cytoplasm. It is found in the nucleus. Its subcellular location is the nucleolus. In terms of biological role, component of the ribosome, a large ribonucleoprotein complex responsible for the synthesis of proteins in the cell. The small ribosomal subunit (SSU) binds messenger RNAs (mRNAs) and translates the encoded message by selecting cognate aminoacyl-transfer RNA (tRNA) molecules. The large subunit (LSU) contains the ribosomal catalytic site termed the peptidyl transferase center (PTC), which catalyzes the formation of peptide bonds, thereby polymerizing the amino acids delivered by tRNAs into a polypeptide chain. The nascent polypeptides leave the ribosome through a tunnel in the LSU and interact with protein factors that function in enzymatic processing, targeting, and the membrane insertion of nascent chains at the exit of the ribosomal tunnel. Plays a role in the assembly and function of the 40S ribosomal subunit. Mutations in this protein affects the control of translational fidelity. Involved in nucleolar processing of pre-18S ribosomal RNA and ribosome assembly. This is Small ribosomal subunit protein uS5 (RPS2) from Bos taurus (Bovine).